A 339-amino-acid polypeptide reads, in one-letter code: 4-hydroxy-2-oxovalerate aldolase (339 aa).

The 251-residue stretch at 7–257 (IRIMDTTLRD…QVGVDLYKIM (251 aa)) folds into the Pyruvate carboxyltransferase domain. 15-16 (RD) contributes to the substrate binding site. Asp16 provides a ligand contact to Mn(2+). The active-site Proton acceptor is His19. Substrate is bound by residues Ser169 and His196. The Mn(2+) site is built by His196 and His198. Residue Tyr286 coordinates substrate.

The protein belongs to the 4-hydroxy-2-oxovalerate aldolase family.

It catalyses the reaction (S)-4-hydroxy-2-oxopentanoate = acetaldehyde + pyruvate. The sequence is that of 4-hydroxy-2-oxovalerate aldolase from Pelotomaculum thermopropionicum (strain DSM 13744 / JCM 10971 / SI).